Here is a 294-residue protein sequence, read N- to C-terminus: MAPALSTSCSSVMAFSTSNALRYHHPQISLRNSLRAPKSPSFVRLPLGKVLQSRIVIRAASSAAGNPQSDADFNPYEVLGVNPIEGFDKIKQTYGRKLKDAQRSGDEATAALLEKAYDKLMYAQLMNRKKGVTFGSFKVSKDIKYADKQPIIPWGPRFSRSSKNDMLINLAISVVFSAWIAIKRNVEYKPLQFMSFVFVYRIFEKLKSFEAPSSPIYNEEGEESGRGLRMGKRLLRSLSLVFGSILLASLAYTGFLNGIEYMGYSIPMVLYNNQELIVTASSAFMLYVIASFYR.

Residues 1–58 (MAPALSTSCSSVMAFSTSNALRYHHPQISLRNSLRAPKSPSFVRLPLGKVLQSRIVIR) constitute a chloroplast transit peptide. The Stromal portion of the chain corresponds to 59–164 (AASSAAGNPQ…GPRFSRSSKN (106 aa)). The segment at 74–152 (NPYEVLGVNP…IKYADKQPII (79 aa)) is J-like domain. Residues 165-182 (DMLINLAISVVFSAWIAI) traverse the membrane as a helical segment. Over 183–233 (KRNVEYKPLQFMSFVFVYRIFEKLKSFEAPSSPIYNEEGEESGRGLRMGKR) the chain is Chloroplast intermembrane. A helical membrane pass occupies residues 234–256 (LLRSLSLVFGSILLASLAYTGFL). At 257–275 (NGIEYMGYSIPMVLYNNQE) the chain is on the stromal side. The chain crosses the membrane as a helical span at residues 276-293 (LIVTASSAFMLYVIASFY). Residue arginine 294 is a topological domain, chloroplast intermembrane.

Interacts (via J-like domain) with ARC6 (via J domain).

Its subcellular location is the plastid. The protein localises to the chloroplast inner membrane. In terms of biological role, probably involved in the regulation of the fatty acid metabolic process in chloroplasts, especially chloroplastic galactolipids monogalactosyldiacylglycerol (MGDG) and digalactosyldiacylglycerol (DGDG). This chain is Protein CHLOROPLAST J-LIKE DOMAIN 1, chloroplastic, found in Arabidopsis thaliana (Mouse-ear cress).